We begin with the raw amino-acid sequence, 1941 residues long: Myosin-7B (1941 aa).

In terms of domain architecture, Myosin N-terminal SH3-like spans 30-80 (DGKKRVWVPDEQDAYVEAEVKTEATGGKVTVETKDQKVLTVRETEMQPMNP). The Myosin motor domain occupies 84–785 (DLLEDMAMMT…LLGILEELRD (702 aa)). An ATP-binding site is contributed by 177–184 (GESGAGKT). Actin-binding regions lie at residues 662-684 (LNKLMTNLRATQPHFVRCIVPNE) and 764-778 (QFGHTKVFFKAGLLG). Residues 788 to 817 (LAKVLTLLQARSRGRLMRLEYQRMLGGRDA) form the IQ domain. Positions 846-1935 (LLRSAQAEEE…KLRARSRDAL (1090 aa)) form a coiled coil. The tract at residues 1887–1941 (RQFEEAEQQASTNLAKYRKAQHELDDAEERADMAETQANKLRARSRDALGPKHKE) is disordered. Residues 1930-1941 (RSRDALGPKHKE) show a composition bias toward basic and acidic residues.

Belongs to the TRAFAC class myosin-kinesin ATPase superfamily. Myosin family. In terms of assembly, muscle myosin is a hexameric protein that consists of 2 heavy chain subunits (MHC), 2 alkali light chain subunits (MLC) and 2 regulatory light chain subunits (MLC-2).

Its subcellular location is the membrane. Functionally, involved in muscle contraction. The chain is Myosin-7B (Myh7b) from Mus musculus (Mouse).